A 459-amino-acid polypeptide reads, in one-letter code: Ribulose bisphosphate carboxylase large chain (459 aa).

N6,N6,N6-trimethyllysine is present on K4. Residues N113 and T163 each contribute to the substrate site. K165 acts as the Proton acceptor in catalysis. K167 is a substrate binding site. Residues K191, D193, and E194 each contribute to the Mg(2+) site. K191 carries the N6-carboxylysine modification. H284 serves as the catalytic Proton acceptor. Substrate contacts are provided by R285, H317, and S369.

This sequence belongs to the RuBisCO large chain family. Type I subfamily. As to quaternary structure, heterohexadecamer of 8 large chains and 8 small chains; disulfide-linked. The disulfide link is formed within the large subunit homodimers. The cofactor is Mg(2+). The disulfide bond which can form in the large chain dimeric partners within the hexadecamer appears to be associated with oxidative stress and protein turnover.

It localises to the plastid. It is found in the chloroplast. The catalysed reaction is 2 (2R)-3-phosphoglycerate + 2 H(+) = D-ribulose 1,5-bisphosphate + CO2 + H2O. The enzyme catalyses D-ribulose 1,5-bisphosphate + O2 = 2-phosphoglycolate + (2R)-3-phosphoglycerate + 2 H(+). In terms of biological role, ruBisCO catalyzes two reactions: the carboxylation of D-ribulose 1,5-bisphosphate, the primary event in carbon dioxide fixation, as well as the oxidative fragmentation of the pentose substrate in the photorespiration process. Both reactions occur simultaneously and in competition at the same active site. In Nypa fruticans (Nypa palm), this protein is Ribulose bisphosphate carboxylase large chain.